Reading from the N-terminus, the 364-residue chain is Peroxisome biogenesis protein 3-2 (364 aa).

A helical membrane pass occupies residues Val-15–Tyr-32. Residues Asn-33–Ala-62 adopt a coiled-coil conformation.

It belongs to the peroxin-3 family.

It localises to the peroxisome membrane. Its function is as follows. Involved in morphology determination of peroxisomes, but not in import of peroxisomal matrix proteins. May act as a docking factor for PEX19 and be necessary for the import of peroxisomal membrane proteins in the peroxisomes. In Arabidopsis thaliana (Mouse-ear cress), this protein is Peroxisome biogenesis protein 3-2 (PEX3-2).